Reading from the N-terminus, the 290-residue chain is MDIEAYFERIGYQSTRSKLDLKTLTEILQHQIRAIPFENLNIHCGESMELSLEAIFDQIVRKKRGGWCLQVNHLLYWALTKLGFETTMLGGYVFNTPANKYSSGMIHLLVQVTISGKDYIVDAGFGRSYQMWEPLELTSGKDQPQVPAIFRLTEENGTWYLDQIRREQYVPNQEFINSDLLEKNKYRKIYSFTLEPRTIEDFESMNTYLQTSPASVFTSKSFCSLQTPEGVHCLVGSTLTYRRFSYKDNVDLVEFKSLTEEEIEDVLRTIFGVSLERKLVPKHGDRFFTI.

Catalysis depends on C68, which acts as the Acyl-thioester intermediate. Residues S103 and G104 each coordinate CoA. 106–107 (IH) is a substrate binding site. Active-site residues include H107 and D122. Residue Y208 participates in CoA binding.

This sequence belongs to the arylamine N-acetyltransferase family.

The protein localises to the cytoplasm. It carries out the reaction an arylamine + acetyl-CoA = an N-acetylarylamine + CoA. It catalyses the reaction an N-hydroxyarylamine + acetyl-CoA = an N-acetoxyarylamine + CoA. In terms of biological role, catalyzes the N- or O-acetylation of various arylamine and heterocyclic amine substrates, and participates in the detoxification of a plethora of hydrazine and arylamine drugs. The polypeptide is Arylamine N-acetyltransferase 2 (Nat2) (Mus musculus (Mouse)).